We begin with the raw amino-acid sequence, 507 residues long: 2,3-bisphosphoglycerate-independent phosphoglycerate mutase (507 aa).

Residues Asp-13 and Ser-63 each coordinate Mn(2+). Ser-63 functions as the Phosphoserine intermediate in the catalytic mechanism. Substrate contacts are provided by residues His-124, 153 to 154 (RD), Arg-183, Arg-189, 254 to 257 (RADR), and Lys-330. 5 residues coordinate Mn(2+): Asp-396, His-400, Asp-437, His-438, and His-456.

The protein belongs to the BPG-independent phosphoglycerate mutase family. As to quaternary structure, monomer. It depends on Mn(2+) as a cofactor.

It catalyses the reaction (2R)-2-phosphoglycerate = (2R)-3-phosphoglycerate. The protein operates within carbohydrate degradation; glycolysis; pyruvate from D-glyceraldehyde 3-phosphate: step 3/5. In terms of biological role, catalyzes the interconversion of 2-phosphoglycerate and 3-phosphoglycerate. This Paracoccus denitrificans (strain Pd 1222) protein is 2,3-bisphosphoglycerate-independent phosphoglycerate mutase.